The primary structure comprises 189 residues: 7-methyl-GTP pyrophosphatase (189 aa).

The active-site Proton acceptor is the Asp71.

This sequence belongs to the Maf family. YceF subfamily. A divalent metal cation serves as cofactor.

The protein localises to the cytoplasm. It carries out the reaction N(7)-methyl-GTP + H2O = N(7)-methyl-GMP + diphosphate + H(+). Its function is as follows. Nucleoside triphosphate pyrophosphatase that hydrolyzes 7-methyl-GTP (m(7)GTP). May have a dual role in cell division arrest and in preventing the incorporation of modified nucleotides into cellular nucleic acids. This chain is 7-methyl-GTP pyrophosphatase, found in Bdellovibrio bacteriovorus (strain ATCC 15356 / DSM 50701 / NCIMB 9529 / HD100).